A 205-amino-acid polypeptide reads, in one-letter code: Protein N-terminal glutamine amidohydrolase (205 aa).

Catalysis depends on residues Cys-20, His-74, and Asp-90.

The protein belongs to the NTAQ1 family. As to quaternary structure, monomer.

It carries out the reaction N-terminal L-glutaminyl-[protein] + H2O = N-terminal L-glutamyl-[protein] + NH4(+). Its function is as follows. Mediates the side-chain deamidation of N-terminal glutamine residues to glutamate, an important step in N-end rule pathway of protein degradation. Conversion of the resulting N-terminal glutamine to glutamate renders the protein susceptible to arginylation, polyubiquitination and degradation as specified by the N-end rule. Does not act on substrates with internal or C-terminal glutamine and does not act on non-glutamine residues in any position. This Drosophila ananassae (Fruit fly) protein is Protein N-terminal glutamine amidohydrolase (tun).